Here is a 192-residue protein sequence, read N- to C-terminus: Ion-translocating oxidoreductase complex subunit A (192 aa).

The next 6 helical transmembrane spans lie at 5 to 25 (VLLL…FLGL), 39 to 59 (IGMG…AYLV), 67 to 87 (LGIE…VVQF), 102 to 122 (LLGI…VALL), 134 to 154 (IIYG…FASM), and 171 to 191 (SIAM…TGLV).

Belongs to the NqrDE/RnfAE family. The complex is composed of six subunits: RnfA, RnfB, RnfC, RnfD, RnfE and RnfG.

The protein resides in the cell inner membrane. Its function is as follows. Part of a membrane-bound complex that couples electron transfer with translocation of ions across the membrane. The protein is Ion-translocating oxidoreductase complex subunit A of Vibrio parahaemolyticus serotype O3:K6 (strain RIMD 2210633).